The following is a 212-amino-acid chain: ATP-dependent dethiobiotin synthetase BioD (212 aa).

An ATP-binding site is contributed by 13-18; that stretch reads GIGKTV. Threonine 17 contacts Mg(2+). Lysine 33 is an active-site residue. Serine 37 contacts substrate. Mg(2+) is bound at residue glutamate 100. ATP contacts are provided by residues 100 to 103 and 184 to 186; these read EGAG and PRL.

The protein belongs to the dethiobiotin synthetase family. As to quaternary structure, homodimer. Mg(2+) is required as a cofactor.

It is found in the cytoplasm. The enzyme catalyses (7R,8S)-7,8-diammoniononanoate + CO2 + ATP = (4R,5S)-dethiobiotin + ADP + phosphate + 3 H(+). It participates in cofactor biosynthesis; biotin biosynthesis; biotin from 7,8-diaminononanoate: step 1/2. Its function is as follows. Catalyzes a mechanistically unusual reaction, the ATP-dependent insertion of CO2 between the N7 and N8 nitrogen atoms of 7,8-diaminopelargonic acid (DAPA, also called 7,8-diammoniononanoate) to form a ureido ring. This chain is ATP-dependent dethiobiotin synthetase BioD, found in Brucella anthropi (strain ATCC 49188 / DSM 6882 / CCUG 24695 / JCM 21032 / LMG 3331 / NBRC 15819 / NCTC 12168 / Alc 37) (Ochrobactrum anthropi).